Consider the following 201-residue polypeptide: Potassium-transporting ATPase KdpC subunit (201 aa).

A helical transmembrane segment spans residues 13–33 (IIFIIFTILCGGIYTIFITGI).

The protein belongs to the KdpC family. In terms of assembly, the system is composed of three essential subunits: KdpA, KdpB and KdpC.

The protein localises to the cell membrane. Part of the high-affinity ATP-driven potassium transport (or Kdp) system, which catalyzes the hydrolysis of ATP coupled with the electrogenic transport of potassium into the cytoplasm. This subunit acts as a catalytic chaperone that increases the ATP-binding affinity of the ATP-hydrolyzing subunit KdpB by the formation of a transient KdpB/KdpC/ATP ternary complex. The sequence is that of Potassium-transporting ATPase KdpC subunit from Clostridium botulinum (strain Alaska E43 / Type E3).